The chain runs to 444 residues: Phosphoglucosamine mutase (444 aa).

The active-site Phosphoserine intermediate is S101. 4 residues coordinate Mg(2+): S101, D240, D242, and D244. The residue at position 101 (S101) is a Phosphoserine.

This sequence belongs to the phosphohexose mutase family. It depends on Mg(2+) as a cofactor. Post-translationally, activated by phosphorylation.

It catalyses the reaction alpha-D-glucosamine 1-phosphate = D-glucosamine 6-phosphate. Functionally, catalyzes the conversion of glucosamine-6-phosphate to glucosamine-1-phosphate. This chain is Phosphoglucosamine mutase, found in Photobacterium profundum (strain SS9).